We begin with the raw amino-acid sequence, 545 residues long: Putative serine/threonine-protein kinase L673 (545 aa).

A Cyclin N-terminal domain is found at Arg-13–Lys-125. One can recognise a Protein kinase domain in the interval Ile-264 to Phe-543. ATP contacts are provided by residues Leu-270 to Val-278 and Lys-291. The Proton acceptor role is filled by Asp-384.

The protein belongs to the protein kinase superfamily. Ser/Thr protein kinase family.

It catalyses the reaction L-seryl-[protein] + ATP = O-phospho-L-seryl-[protein] + ADP + H(+). The catalysed reaction is L-threonyl-[protein] + ATP = O-phospho-L-threonyl-[protein] + ADP + H(+). The polypeptide is Putative serine/threonine-protein kinase L673 (Acanthamoeba polyphaga (Amoeba)).